We begin with the raw amino-acid sequence, 151 residues long: UPF0251 protein Ctha_0452 (151 aa).

Belongs to the UPF0251 family.

This chain is UPF0251 protein Ctha_0452, found in Chloroherpeton thalassium (strain ATCC 35110 / GB-78).